The chain runs to 298 residues: tRNA dimethylallyltransferase (298 aa).

Residue 16-23 (GPTASGKS) coordinates ATP. 18–23 (TASGKS) is a substrate binding site. Interaction with substrate tRNA stretches follow at residues 41–44 (DSMQ) and 165–169 (QRIVR).

It belongs to the IPP transferase family. Monomer. It depends on Mg(2+) as a cofactor.

The enzyme catalyses adenosine(37) in tRNA + dimethylallyl diphosphate = N(6)-dimethylallyladenosine(37) in tRNA + diphosphate. Catalyzes the transfer of a dimethylallyl group onto the adenine at position 37 in tRNAs that read codons beginning with uridine, leading to the formation of N6-(dimethylallyl)adenosine (i(6)A). The chain is tRNA dimethylallyltransferase from Rhizobium radiobacter (Agrobacterium tumefaciens).